The chain runs to 326 residues: Tagatose 1,6-diphosphate aldolase (326 aa).

It belongs to the aldolase LacD family.

The catalysed reaction is D-tagatofuranose 1,6-bisphosphate = D-glyceraldehyde 3-phosphate + dihydroxyacetone phosphate. Its pathway is carbohydrate metabolism; D-tagatose 6-phosphate degradation; D-glyceraldehyde 3-phosphate and glycerone phosphate from D-tagatose 6-phosphate: step 2/2. The protein is Tagatose 1,6-diphosphate aldolase of Streptococcus pneumoniae (strain ATCC BAA-255 / R6).